The chain runs to 81 residues: UPF0386 protein Smed_0945 (81 aa).

The protein belongs to the UPF0386 family.

This Sinorhizobium medicae (strain WSM419) (Ensifer medicae) protein is UPF0386 protein Smed_0945.